A 404-amino-acid chain; its full sequence is CinA-like protein (404 aa).

This sequence belongs to the CinA family.

The protein is CinA-like protein of Deinococcus radiodurans (strain ATCC 13939 / DSM 20539 / JCM 16871 / CCUG 27074 / LMG 4051 / NBRC 15346 / NCIMB 9279 / VKM B-1422 / R1).